The sequence spans 583 residues: Pectinesterase/pectinesterase inhibitor U1 (583 aa).

A signal peptide spans 1–40; sequence MTRVEDFFSKQIDFCKRKKKIYLAIVASVLLVAAVIGVVA. The pectinesterase inhibitor U1 stretch occupies residues 60 to 221; that stretch reads SSAHAIVKSA…EKMCSNALAM (162 aa). 3 N-linked (GlcNAc...) asparagine glycosylation sites follow: N85, N105, and N224. The pectinesterase U1 stretch occupies residues 272 to 570; that stretch reads DVVVAADGSG…TPGRFIAGGS (299 aa). Substrate contacts are provided by T347 and Q377. D400 functions as the Proton donor; for pectinesterase activity in the catalytic mechanism. A disulfide bridge links C414 with C434. The Nucleophile; for pectinesterase activity role is filled by D421. R489 and W491 together coordinate substrate.

The protein in the N-terminal section; belongs to the PMEI family. This sequence in the C-terminal section; belongs to the pectinesterase family.

The protein resides in the secreted. It is found in the cell wall. It catalyses the reaction [(1-&gt;4)-alpha-D-galacturonosyl methyl ester](n) + n H2O = [(1-&gt;4)-alpha-D-galacturonosyl](n) + n methanol + n H(+). It participates in glycan metabolism; pectin degradation; 2-dehydro-3-deoxy-D-gluconate from pectin: step 1/5. Its function is as follows. Acts in the modification of cell walls via demethylesterification of cell wall pectin. This Solanum lycopersicum (Tomato) protein is Pectinesterase/pectinesterase inhibitor U1 (PMEU1).